The sequence spans 642 residues: MPVITLPDGSQRVFANPVSTMDVAADIGPGLAKACIAGRVNGELKDACDLIHEDASLSIITARDEEGLEILRHSCAHLLGHAIKQLWPQTKMAIGPVIDNGFYYDVDLEHKLTADDIAALEKRMLELAKTDYDVVKRVVSWQEARDTFEGRGESYKMAILDENIAKDATPALYHHEEYTDMCRGPHVPNMRFCHHFKLMSVAGAYWRGDSNNKMLQRIYGTAWGDKKALNTHLARLEEAAKRDHRKIGKQLDLYHMQEEAPGMVFWHNDGWSIFRELETFIRHKLSEYDYQEVKGPFMMDRVLWERSGHWDKYADAMFTTASENREYAIKPMNCPGHVQIFNQGLKSYRDLPLRMAEFGCCHRNEPSGSLHGLMRVRGFTQDDAHIFCTEEQVQEEVSACIRMVYDTYSTFGFENIVVKLSTRPEKRIGDDDMWDRAESALIEALNANGIAFEILPGEGAFYGPKIEFTLHDCLDRAWQCGTVQLDYALPGRLGATYVAEDNARQTPVMIHRAILGSLERFIGILIEEYAGRFPAWLAPVQAVVMNITDKQADYVEELVKFFKEQGIRASQDLRNEKIGFKIREHTLRRVPYLLVVGDQEMENREIAVRTRDGKDLGKMSIDAFVASVKEQISHRSLKLLEE.

Positions 1–61 constitute a TGS domain; sequence MPVITLPDGS…HEDASLSIIT (61 aa). The tract at residues 243–534 is catalytic; the sequence is DHRKIGKQLD…LIEEYAGRFP (292 aa). Residues Cys-334, His-385, and His-511 each coordinate Zn(2+).

This sequence belongs to the class-II aminoacyl-tRNA synthetase family. In terms of assembly, homodimer. Zn(2+) serves as cofactor.

The protein resides in the cytoplasm. It carries out the reaction tRNA(Thr) + L-threonine + ATP = L-threonyl-tRNA(Thr) + AMP + diphosphate + H(+). Functionally, catalyzes the attachment of threonine to tRNA(Thr) in a two-step reaction: L-threonine is first activated by ATP to form Thr-AMP and then transferred to the acceptor end of tRNA(Thr). Also edits incorrectly charged L-seryl-tRNA(Thr). In Shewanella amazonensis (strain ATCC BAA-1098 / SB2B), this protein is Threonine--tRNA ligase.